A 296-amino-acid chain; its full sequence is GTPase Era (296 aa).

Positions 7-174 (RTGFVAVVGR…LDEIAARLPE (168 aa)) constitute an Era-type G domain. A G1 region spans residues 15–22 (GRPNVGKS). GTP is bound at residue 15–22 (GRPNVGKS). Residues 41 to 45 (QTTRH) form a G2 region. A G3 region spans residues 62–65 (DTPG). GTP is bound by residues 62-66 (DTPGF) and 123-126 (SKID). The interval 123–126 (SKID) is G4. A G5 region spans residues 153-155 (VSA). One can recognise a KH type-2 domain in the interval 205-281 (VGDELPYGCT…HLEVYIKVRK (77 aa)).

Belongs to the TRAFAC class TrmE-Era-EngA-EngB-Septin-like GTPase superfamily. Era GTPase family. As to quaternary structure, monomer.

It localises to the cytoplasm. It is found in the cell inner membrane. Its function is as follows. An essential GTPase that binds both GDP and GTP, with rapid nucleotide exchange. Plays a role in 16S rRNA processing and 30S ribosomal subunit biogenesis and possibly also in cell cycle regulation and energy metabolism. This chain is GTPase Era, found in Bordetella petrii (strain ATCC BAA-461 / DSM 12804 / CCUG 43448).